The sequence spans 362 residues: Phospho-2-dehydro-3-deoxyheptonate aldolase (362 aa).

The protein belongs to the class-I DAHP synthase family.

It carries out the reaction D-erythrose 4-phosphate + phosphoenolpyruvate + H2O = 7-phospho-2-dehydro-3-deoxy-D-arabino-heptonate + phosphate. The protein operates within metabolic intermediate biosynthesis; chorismate biosynthesis; chorismate from D-erythrose 4-phosphate and phosphoenolpyruvate: step 1/7. Functionally, stereospecific condensation of phosphoenolpyruvate (PEP) and D-erythrose-4-phosphate (E4P) giving rise to 3-deoxy-D-arabino-heptulosonate-7-phosphate (DAHP). This is Phospho-2-dehydro-3-deoxyheptonate aldolase (aroG) from Haemophilus influenzae (strain ATCC 51907 / DSM 11121 / KW20 / Rd).